We begin with the raw amino-acid sequence, 180 residues long: Adenine phosphoribosyltransferase (180 aa).

Residue A2 is modified to N-acetylalanine. S15 and S30 each carry phosphoserine. Position 60 is a phosphotyrosine (Y60). At S66 the chain carries Phosphoserine. K114 is modified (N6-acetyllysine). T135 is modified (phosphothreonine).

This sequence belongs to the purine/pyrimidine phosphoribosyltransferase family. As to quaternary structure, homodimer.

Its subcellular location is the cytoplasm. It catalyses the reaction AMP + diphosphate = 5-phospho-alpha-D-ribose 1-diphosphate + adenine. The protein operates within purine metabolism; AMP biosynthesis via salvage pathway; AMP from adenine: step 1/1. In terms of biological role, catalyzes a salvage reaction resulting in the formation of AMP, that is energically less costly than de novo synthesis. The polypeptide is Adenine phosphoribosyltransferase (Dipodillus campestris (North African gerbil)).